Reading from the N-terminus, the 73-residue chain is Conotoxin Gla(3)-TxVI (73 aa).

An N-terminal signal peptide occupies residues 1-19 (MQKLIILLLVAAVLMSAQA). The propeptide occupies 20–44 (VLQEKRPKEKIKFLSKRKTDAEKQQ). Disulfide bonds link C48/C62, C55/C66, and C61/C71. Position 49 is a 4-hydroxyproline (P49). Position 53 is a 4-carboxyglutamate; partial (E53). P54 bears the 4-hydroxyproline mark. Residue E60 is modified to 4-carboxyglutamate. The residue at position 64 (W64) is a 6'-bromotryptophan.

The protein belongs to the conotoxin O2 superfamily. As to expression, expressed by the venom duct.

It is found in the secreted. In Conus textile (Cloth-of-gold cone), this protein is Conotoxin Gla(3)-TxVI.